A 113-amino-acid chain; its full sequence is RING-box protein 2 (113 aa).

Positions Met-1–Gly-26 are disordered. Ala-2 carries the N-acetylalanine modification. Zn(2+) contacts are provided by Cys-50, Cys-53, Cys-61, Cys-64, Cys-73, Cys-80, His-82, His-85, Cys-87, Cys-88, Cys-99, and Cys-102. The RING-type zinc finger occupies Cys-61–Gln-103.

Belongs to the RING-box family. As to quaternary structure, catalytic component of multiple cullin-5-RING E3 ubiquitin-protein ligase complexes (ECS complexes, also named CRL5 complexes) composed of CUL5, Elongin BC (ELOB and ELOC), RNF7/RBX2 and a variable SOCS box domain-containing protein as substrate-specific recognition component. Also interacts (with lower preference) with CUL1, CUL2, CUL3, CUL4A and CUL4B; additional evidence is however required to confirm this result in vivo. Interacts with UBE2F. Interacts with CSNK2B, the interaction is not affected by phosphorylation by CK2. May also interact with DCUN1D1, DCUN1D2, DCUN1D3, DCUN1D4 and DCUN1D5.

It localises to the cytoplasm. The protein resides in the nucleus. It carries out the reaction S-ubiquitinyl-[E2 ubiquitin-conjugating enzyme]-L-cysteine + [acceptor protein]-L-lysine = [E2 ubiquitin-conjugating enzyme]-L-cysteine + N(6)-ubiquitinyl-[acceptor protein]-L-lysine.. The catalysed reaction is S-[NEDD8-protein]-yl-[E2 NEDD8-conjugating enzyme]-L-cysteine + [cullin]-L-lysine = [E2 NEDD8-conjugating enzyme]-L-cysteine + N(6)-[NEDD8-protein]-yl-[cullin]-L-lysine.. It participates in protein modification; protein ubiquitination. The protein operates within protein modification; protein neddylation. Its function is as follows. Catalytic component of multiple cullin-5-RING E3 ubiquitin-protein ligase complexes (ECS complexes), which mediate the ubiquitination and subsequent proteasomal degradation of target proteins. It is thereby involved in various biological processes, such as cell cycle progression, signal transduction and transcription. The functional specificity of the E3 ubiquitin-protein ligase ECS complexes depend on the variable SOCS box-containing substrate recognition component. Within ECS complexes, RNF7/RBX2 recruits the E2 ubiquitination enzyme to the complex via its RING-type and brings it into close proximity to the substrate. Catalytic subunit of various SOCS-containing ECS complexes, such as the ECS(SOCS7) complex, that regulate reelin signaling by mediating ubiquitination and degradation of DAB1. The ECS(SOCS2) complex mediates the ubiquitination and subsequent proteasomal degradation of phosphorylated EPOR and GHR. Promotes ubiquitination and degradation of NF1, thereby regulating Ras protein signal transduction. As part of the ECS(ASB9) complex, catalyzes ubiquitination and degradation of CKB. The ECS(SPSB3) complex catalyzes ubiquitination of nuclear CGAS. As part of the ECS(RAB40C) complex, mediates ANKRD28 ubiquitination and degradation, thereby inhibiting protein phosphatase 6 (PP6) complex activity and focal adhesion assembly during cell migration. As part of some ECS complex, catalyzes 'Lys-11'-linked ubiquitination and degradation of BTRC. ECS complexes and ARIH2 collaborate in tandem to mediate ubiquitination of target proteins; ARIH2 mediating addition of the first ubiquitin on CRLs targets. Specifically catalyzes the neddylation of CUL5 via its interaction with UBE2F. Does not catalyze neddylation of other cullins (CUL1, CUL2, CUL3, CUL4A or CUL4B). May play a role in protecting cells from apoptosis induced by redox agents. The protein is RING-box protein 2 of Mus musculus (Mouse).